Consider the following 380-residue polypeptide: Palmitoyltransferase ZDHHC18 (380 aa).

The disordered stretch occupies residues 1 to 59; it reads MKDCEYQQISPGAAPPPASPGARRPGPAAPPAPSPGPAPGAPRWSGSGSGSGSLGRRPR. At 1–82 the chain is on the cytoplasmic side; that stretch reads MKDCEYQQIS…CGGRLMLAGH (82 aa). Position 19 is a phosphoserine (Ser19). Pro residues predominate over residues 27–40; it reads PAAPPAPSPGPAPG. A helical membrane pass occupies residues 83–103; sequence GGVFALTLLLILSTTILFFVF. Over 104-111 the chain is Lumenal; the sequence is DCPYLART. A helical transmembrane segment spans residues 112-132; it reads LTLAIPIIAAILFFFVMSCLL. At 133 to 227 the chain is on the cytoplasmic side; the sequence is QTSFTDPGIL…GNCVGRRNYR (95 aa). The DHHC domain maps to 184–234; that stretch reads KYCFTCKMFRPPRTSHCSVCDNCVERFDHHCPWVGNCVGRRNYRFFYAFIL. Catalysis depends on Cys214, which acts as the S-palmitoyl cysteine intermediate. Residues 228-248 form a helical membrane-spanning segment; it reads FFYAFILSLSFLTAFIFACVV. Topologically, residues 249–269 are lumenal; sequence THLTLLSQGSNFLSALKKTPA. The helical transmembrane segment at 270–290 threads the bilayer; that stretch reads SVLELVICFFSIWSILGLSGF. Residues 291 to 380 are Cytoplasmic-facing; the sequence is HTYLVASNLT…PDASMVGGHP (90 aa). Positions 355-380 are disordered; it reads ALPSPIRSDDPACGAKPDASMVGGHP.

This sequence belongs to the DHHC palmitoyltransferase family. ERF2/ZDHHC9 subfamily. In terms of tissue distribution, ubiquitously expressed.

The protein resides in the golgi apparatus membrane. The catalysed reaction is L-cysteinyl-[protein] + hexadecanoyl-CoA = S-hexadecanoyl-L-cysteinyl-[protein] + CoA. In terms of biological role, palmitoyltransferase that catalyzes the addition of palmitate onto various protein substrates, such as CGAS, HRAS and LCK. Palmitoylates HRAS and LCK. Acts as a negative regulator of the cGAS-STING pathway be mediating palmitoylation and inactivation of CGAS. May also have a palmitoyltransferase activity toward the beta-2 adrenergic receptor/ADRB2 and therefore regulate G protein-coupled receptor signaling. The polypeptide is Palmitoyltransferase ZDHHC18 (Mus musculus (Mouse)).